Consider the following 375-residue polypeptide: uncharacterized protein (375 aa).

The N-terminal stretch at 1–20 (MKNKLFIILIIFIILKIVIC) is a signal peptide. The Extracellular portion of the chain corresponds to 21-335 (QNTTPSKLIP…EKQVERKITP (315 aa)). Residues 30–42 (PQQQQKQKQQQTQ) are compositionally biased toward low complexity. Disordered regions lie at residues 30–74 (PQQQ…QPQQ) and 113–253 (SQNV…PHNH). Over residues 43 to 53 (PHHHHHHHQQH) the composition is skewed to basic residues. The span at 54 to 74 (QQHQQQHQPNQQIKQQQQPQQ) shows a compositional bias: low complexity. A compositionally biased stretch (basic residues) spans 120 to 151 (PPHHTQQRVPHHHGPNGAPHHHGPNGAPHHHG). A compositionally biased stretch (polar residues) spans 168-180 (GHNTQGHVQTNHV). The span at 181 to 220 (NNINKNNINNNNNNNNNNNNNNNNNNNNNINDNKNIRNNI) shows a compositional bias: low complexity. The helical transmembrane segment at 336 to 356 (IMVLYILLASTMVIQLFIMVF) threads the bilayer. The Cytoplasmic segment spans residues 357-375 (KQVKHIREINAKTTMESLL).

Its subcellular location is the membrane. This is an uncharacterized protein from Dictyostelium discoideum (Social amoeba).